A 358-amino-acid polypeptide reads, in one-letter code: Ribosomal RNA-processing protein 8 (358 aa).

Residues 1 to 81 are disordered; the sequence is MKPFEVPPWE…PQDSSDDDYE (81 aa). Residues 30–44 are compositionally biased toward basic residues; the sequence is AKKKPKKKKPKKKKA. Phosphoserine is present on residues S75 and S76. Positions 185, 220, 238, and 267 each coordinate S-adenosyl-L-methionine.

This sequence belongs to the methyltransferase superfamily. RRP8 family.

The protein localises to the nucleus. Its subcellular location is the nucleolus. Its function is as follows. Probable methyltransferase required to silence rDNA. This Drosophila melanogaster (Fruit fly) protein is Ribosomal RNA-processing protein 8.